The chain runs to 449 residues: tRNA modification GTPase MnmE (449 aa).

(6S)-5-formyl-5,6,7,8-tetrahydrofolate contacts are provided by Arg24, Glu85, and Arg124. The TrmE-type G domain occupies 220 to 369 (GIRTAIAGPP…LEEAIIQAFS (150 aa)). Asn230 is a binding site for K(+). Residues 230-235 (NVGKSS), 249-255 (SNIAGTT), and 274-277 (DTAG) contribute to the GTP site. Ser234 serves as a coordination point for Mg(2+). K(+) contacts are provided by Ser249, Ile251, and Thr254. Thr255 lines the Mg(2+) pocket. Lys449 is a binding site for (6S)-5-formyl-5,6,7,8-tetrahydrofolate.

Belongs to the TRAFAC class TrmE-Era-EngA-EngB-Septin-like GTPase superfamily. TrmE GTPase family. In terms of assembly, homodimer. Heterotetramer of two MnmE and two MnmG subunits. K(+) serves as cofactor.

The protein resides in the cytoplasm. Exhibits a very high intrinsic GTPase hydrolysis rate. Involved in the addition of a carboxymethylaminomethyl (cmnm) group at the wobble position (U34) of certain tRNAs, forming tRNA-cmnm(5)s(2)U34. This Akkermansia muciniphila (strain ATCC BAA-835 / DSM 22959 / JCM 33894 / BCRC 81048 / CCUG 64013 / CIP 107961 / Muc) protein is tRNA modification GTPase MnmE.